Consider the following 131-residue polypeptide: Transcription antitermination protein NusB (131 aa).

This sequence belongs to the NusB family.

Its function is as follows. Involved in transcription antitermination. Required for transcription of ribosomal RNA (rRNA) genes. Binds specifically to the boxA antiterminator sequence of the ribosomal RNA (rrn) operons. The polypeptide is Transcription antitermination protein NusB (Campylobacter hominis (strain ATCC BAA-381 / DSM 21671 / CCUG 45161 / LMG 19568 / NCTC 13146 / CH001A)).